The chain runs to 309 residues: Ribose-phosphate pyrophosphokinase (309 aa).

ATP contacts are provided by residues 37–39 (DGE) and 96–97 (RQ). The Mg(2+) site is built by H130 and D169. K192 is an active-site residue. Residues R194, D218, and 222–226 (DTAGT) each bind D-ribose 5-phosphate.

This sequence belongs to the ribose-phosphate pyrophosphokinase family. Class I subfamily. In terms of assembly, homohexamer. It depends on Mg(2+) as a cofactor.

The protein resides in the cytoplasm. The catalysed reaction is D-ribose 5-phosphate + ATP = 5-phospho-alpha-D-ribose 1-diphosphate + AMP + H(+). Its pathway is metabolic intermediate biosynthesis; 5-phospho-alpha-D-ribose 1-diphosphate biosynthesis; 5-phospho-alpha-D-ribose 1-diphosphate from D-ribose 5-phosphate (route I): step 1/1. Involved in the biosynthesis of the central metabolite phospho-alpha-D-ribosyl-1-pyrophosphate (PRPP) via the transfer of pyrophosphoryl group from ATP to 1-hydroxyl of ribose-5-phosphate (Rib-5-P). In Campylobacter jejuni subsp. jejuni serotype O:2 (strain ATCC 700819 / NCTC 11168), this protein is Ribose-phosphate pyrophosphokinase.